The sequence spans 320 residues: Beta-ketoacyl-[acyl-carrier-protein] synthase III (320 aa).

Catalysis depends on residues Cys-114 and His-247. Positions Gln-248–Arg-252 are ACP-binding. Residue Asn-277 is part of the active site.

It belongs to the thiolase-like superfamily. FabH family. Homodimer.

The protein resides in the cytoplasm. It catalyses the reaction malonyl-[ACP] + acetyl-CoA + H(+) = 3-oxobutanoyl-[ACP] + CO2 + CoA. It functions in the pathway lipid metabolism; fatty acid biosynthesis. Functionally, catalyzes the condensation reaction of fatty acid synthesis by the addition to an acyl acceptor of two carbons from malonyl-ACP. Catalyzes the first condensation reaction which initiates fatty acid synthesis and may therefore play a role in governing the total rate of fatty acid production. Possesses both acetoacetyl-ACP synthase and acetyl transacylase activities. Its substrate specificity determines the biosynthesis of branched-chain and/or straight-chain of fatty acids. The sequence is that of Beta-ketoacyl-[acyl-carrier-protein] synthase III from Neisseria meningitidis serogroup C (strain 053442).